The sequence spans 101 residues: Large ribosomal subunit protein uL24 (101 aa).

It belongs to the universal ribosomal protein uL24 family. Part of the 50S ribosomal subunit.

Its function is as follows. One of two assembly initiator proteins, it binds directly to the 5'-end of the 23S rRNA, where it nucleates assembly of the 50S subunit. One of the proteins that surrounds the polypeptide exit tunnel on the outside of the subunit. The polypeptide is Large ribosomal subunit protein uL24 (Streptococcus suis (strain 98HAH33)).